The chain runs to 409 residues: Shaggy-related protein kinase NtK-1 (409 aa).

The segment at 1–27 (MTSVGLAPVSGLRESSSHSVGVDRLPE) is disordered. A Protein kinase domain is found at 73-357 (YMAERIVGQG…ALEAVTHAFF (285 aa)). Residues 79–87 (VGQGSFGVV) and lysine 102 contribute to the ATP site. Residue aspartate 198 is the Proton acceptor of the active site.

The protein belongs to the protein kinase superfamily. CMGC Ser/Thr protein kinase family. GSK-3 subfamily. In terms of processing, autophosphorylated mainly on threonine and serine residues.

It catalyses the reaction L-seryl-[protein] + ATP = O-phospho-L-seryl-[protein] + ADP + H(+). The catalysed reaction is L-threonyl-[protein] + ATP = O-phospho-L-threonyl-[protein] + ADP + H(+). In terms of biological role, may mediate extracellular signals to regulate transcription in differentiating cells. This chain is Shaggy-related protein kinase NtK-1 (NTK-1), found in Nicotiana tabacum (Common tobacco).